Consider the following 90-residue polypeptide: Small ribosomal subunit protein uS15 (90 aa).

Belongs to the universal ribosomal protein uS15 family. In terms of assembly, part of the 30S ribosomal subunit. Forms a bridge to the 50S subunit in the 70S ribosome, contacting the 23S rRNA.

Functionally, one of the primary rRNA binding proteins, it binds directly to 16S rRNA where it helps nucleate assembly of the platform of the 30S subunit by binding and bridging several RNA helices of the 16S rRNA. Its function is as follows. Forms an intersubunit bridge (bridge B4) with the 23S rRNA of the 50S subunit in the ribosome. The sequence is that of Small ribosomal subunit protein uS15 from Wolbachia pipientis subsp. Culex pipiens (strain wPip).